Consider the following 255-residue polypeptide: Acetylglutamate kinase (255 aa).

Residues 40 to 41, Arg-62, and Asn-157 contribute to the substrate site; that span reads GG.

The protein belongs to the acetylglutamate kinase family. ArgB subfamily.

It localises to the cytoplasm. The catalysed reaction is N-acetyl-L-glutamate + ATP = N-acetyl-L-glutamyl 5-phosphate + ADP. The protein operates within amino-acid biosynthesis; L-arginine biosynthesis; N(2)-acetyl-L-ornithine from L-glutamate: step 2/4. Functionally, catalyzes the ATP-dependent phosphorylation of N-acetyl-L-glutamate. The protein is Acetylglutamate kinase of Parabacteroides distasonis (strain ATCC 8503 / DSM 20701 / CIP 104284 / JCM 5825 / NCTC 11152).